Here is a 258-residue protein sequence, read N- to C-terminus: Ditrans,polycis-undecaprenyl-diphosphate synthase ((2E,6E)-farnesyl-diphosphate specific) (258 aa).

Residue Asp24 is part of the active site. Asp24 provides a ligand contact to Mg(2+). Residues 25–28, Trp29, Arg37, His41, and 69–71 each bind substrate; these read GNGR and SSE. Asn72 acts as the Proton acceptor in catalysis. Substrate is bound by residues Trp73, Arg75, Arg192, and 198–200; that span reads RIS. Mg(2+) is bound at residue Glu211.

The protein belongs to the UPP synthase family. In terms of assembly, homodimer. Mg(2+) is required as a cofactor.

It carries out the reaction 8 isopentenyl diphosphate + (2E,6E)-farnesyl diphosphate = di-trans,octa-cis-undecaprenyl diphosphate + 8 diphosphate. In terms of biological role, catalyzes the sequential condensation of isopentenyl diphosphate (IPP) with (2E,6E)-farnesyl diphosphate (E,E-FPP) to yield (2Z,6Z,10Z,14Z,18Z,22Z,26Z,30Z,34E,38E)-undecaprenyl diphosphate (di-trans,octa-cis-UPP). UPP is the precursor of glycosyl carrier lipid in the biosynthesis of bacterial cell wall polysaccharide components such as peptidoglycan and lipopolysaccharide. The protein is Ditrans,polycis-undecaprenyl-diphosphate synthase ((2E,6E)-farnesyl-diphosphate specific) of Xanthomonas campestris pv. campestris (strain ATCC 33913 / DSM 3586 / NCPPB 528 / LMG 568 / P 25).